A 660-amino-acid polypeptide reads, in one-letter code: tRNA 5-methylaminomethyl-2-thiouridine biosynthesis bifunctional protein MnmC (660 aa).

A tRNA (mnm(5)s(2)U34)-methyltransferase region spans residues 1–233 (MTHSHAQLVW…KRHISHGWIA (233 aa)). Residues 260–660 (VGGGLAGAAS…IRRKLDPDAL (401 aa)) are FAD-dependent cmnm(5)s(2)U34 oxidoreductase.

This sequence in the N-terminal section; belongs to the methyltransferase superfamily. tRNA (mnm(5)s(2)U34)-methyltransferase family. It in the C-terminal section; belongs to the DAO family. The cofactor is FAD.

It localises to the cytoplasm. It catalyses the reaction 5-aminomethyl-2-thiouridine(34) in tRNA + S-adenosyl-L-methionine = 5-methylaminomethyl-2-thiouridine(34) in tRNA + S-adenosyl-L-homocysteine + H(+). In terms of biological role, catalyzes the last two steps in the biosynthesis of 5-methylaminomethyl-2-thiouridine (mnm(5)s(2)U) at the wobble position (U34) in tRNA. Catalyzes the FAD-dependent demodification of cmnm(5)s(2)U34 to nm(5)s(2)U34, followed by the transfer of a methyl group from S-adenosyl-L-methionine to nm(5)s(2)U34, to form mnm(5)s(2)U34. This chain is tRNA 5-methylaminomethyl-2-thiouridine biosynthesis bifunctional protein MnmC, found in Chromobacterium violaceum (strain ATCC 12472 / DSM 30191 / JCM 1249 / CCUG 213 / NBRC 12614 / NCIMB 9131 / NCTC 9757 / MK).